The chain runs to 493 residues: Alpha-amylase-related protein (493 aa).

The signal sequence occupies residues 1–19 (MFKFALTLTLCLAGSLSLA). A Pyrrolidone carboxylic acid modification is found at glutamine 20. Residues cysteine 47 and cysteine 103 are joined by a disulfide bond. Residues asparagine 117, glutamine 168, and aspartate 177 each coordinate Ca(2+). Cysteine 156 and cysteine 170 form a disulfide bridge. Arginine 205 provides a ligand contact to chloride. Aspartate 207 (nucleophile) is an active-site residue. Histidine 211 lines the Ca(2+) pocket. Glutamate 244 functions as the Proton donor in the catalytic mechanism. Chloride-binding residues include asparagine 307 and arginine 342. 3 disulfide bridges follow: cysteine 375-cysteine 381, cysteine 417-cysteine 440, and cysteine 447-cysteine 459.

It belongs to the glycosyl hydrolase 13 family. As to quaternary structure, monomer. Ca(2+) serves as cofactor. Requires chloride as cofactor. In terms of tissue distribution, midgut and fat body.

Its subcellular location is the secreted. The catalysed reaction is Endohydrolysis of (1-&gt;4)-alpha-D-glucosidic linkages in polysaccharides containing three or more (1-&gt;4)-alpha-linked D-glucose units.. This is Alpha-amylase-related protein (Amyrel) from Drosophila melanogaster (Fruit fly).